Reading from the N-terminus, the 304-residue chain is Recombination-associated protein RdgC (304 aa).

Belongs to the RdgC family.

It is found in the cytoplasm. Its subcellular location is the nucleoid. Functionally, may be involved in recombination. This Shewanella sp. (strain W3-18-1) protein is Recombination-associated protein RdgC.